The chain runs to 562 residues: MGLQARLLGLLALVIAGKCTYNPEPDQRWMLPPGWVSLGRVDPEEELSLTFALKQRNLERLSELVQAVSDPSSPQYGKYLTLEDVAELVQPSPLTLLTVQKWLSAAGARNCDSVTTQDFLTCWLSVRQAELLLPGAEFHRYVGGPTKTHVIRSPHPYQLPQALAPHVDFVGGLHRFPPSSPRQRPEPQQVGTVSLHLGVTPSVLRQRYNLTAKDVGSGTTNNSQACAQFLEQYFHNSDLTEFMRLFGGSFTHQASVAKVVGKQGRGRAGIEASLDVEYLMSAGANISTWVYSSPGRHEAQEPFLQWLLLLSNESSLPHVHTVSYGDDEDSLSSIYIQRVNTEFMKAAARGLTLLFASGDTGAGCWSVSGRHKFRPSFPASSPYVTTVGGTSFKNPFLITDEVVDYISGGGFSNVFPRPPYQEEAVAQFLKSSSHLPPSSYFNASGRAYPDVAALSDGYWVVSNMVPIPWVSGTSASTPVFGGILSLINEHRILNGRPPLGFLNPRLYQQHGTGLFDVTHGCHESCLNEEVEGQGFCSGPGWDPVTGWGTPNFPALLKTLLNP.

Positions 1–19 (MGLQARLLGLLALVIAGKC) are cleaved as a signal peptide. The propeptide at 20 to 194 (TYNPEPDQRW…PEPQQVGTVS (175 aa)) is removed in mature form. C111 and C122 are oxidised to a cystine. The Peptidase S53 domain occupies 198–562 (GVTPSVLRQR…PALLKTLLNP (365 aa)). An N-linked (GlcNAc...) asparagine glycan is attached at N209. A glycan (N-linked (GlcNAc...) (high mannose) asparagine) is linked at N221. Catalysis depends on charge relay system residues E271 and D275. Residues N285, N312, and N442 are each glycosylated (N-linked (GlcNAc...) asparagine). 2 disulfides stabilise this stretch: C364–C525 and C521–C536. The active-site Charge relay system is S474. D516 and V517 together coordinate Ca(2+). Residues G538, G540, and D542 each coordinate Ca(2+).

In terms of assembly, monomer. Interacts with CLN5. Interacts with CLN3. Ca(2+) serves as cofactor. In terms of processing, activated by autocatalytic proteolytical processing upon acidification. N-glycosylation is required for processing and activity.

It is found in the lysosome. The protein localises to the melanosome. It carries out the reaction Release of an N-terminal tripeptide from a polypeptide, but also has endopeptidase activity.. Its function is as follows. Lysosomal serine protease with tripeptidyl-peptidase I activity. May act as a non-specific lysosomal peptidase which generates tripeptides from the breakdown products produced by lysosomal proteinases. Requires substrates with an unsubstituted N-terminus. The sequence is that of Tripeptidyl-peptidase 1 (Tpp1) from Mus musculus (Mouse).